The primary structure comprises 186 residues: Putative thiamine-phosphate synthase 2 (186 aa).

Residues 35–39 (QLREK) and Asn-67 contribute to the 4-amino-2-methyl-5-(diphosphooxymethyl)pyrimidine site. Glu-68 serves as a coordination point for Mg(2+). A 4-amino-2-methyl-5-(diphosphooxymethyl)pyrimidine-binding site is contributed by Ser-105. 131 to 133 (TSS) serves as a coordination point for 2-[(2R,5Z)-2-carboxy-4-methylthiazol-5(2H)-ylidene]ethyl phosphate. His-134 lines the 4-amino-2-methyl-5-(diphosphooxymethyl)pyrimidine pocket. Residues Gly-161 and 181-182 (IS) contribute to the 2-[(2R,5Z)-2-carboxy-4-methylthiazol-5(2H)-ylidene]ethyl phosphate site.

Belongs to the thiamine-phosphate synthase family. It depends on Mg(2+) as a cofactor.

It carries out the reaction 2-[(2R,5Z)-2-carboxy-4-methylthiazol-5(2H)-ylidene]ethyl phosphate + 4-amino-2-methyl-5-(diphosphooxymethyl)pyrimidine + 2 H(+) = thiamine phosphate + CO2 + diphosphate. The enzyme catalyses 2-(2-carboxy-4-methylthiazol-5-yl)ethyl phosphate + 4-amino-2-methyl-5-(diphosphooxymethyl)pyrimidine + 2 H(+) = thiamine phosphate + CO2 + diphosphate. It catalyses the reaction 4-methyl-5-(2-phosphooxyethyl)-thiazole + 4-amino-2-methyl-5-(diphosphooxymethyl)pyrimidine + H(+) = thiamine phosphate + diphosphate. It participates in cofactor biosynthesis; thiamine diphosphate biosynthesis; thiamine phosphate from 4-amino-2-methyl-5-diphosphomethylpyrimidine and 4-methyl-5-(2-phosphoethyl)-thiazole: step 1/1. Its function is as follows. Condenses 4-methyl-5-(beta-hydroxyethyl)thiazole monophosphate (THZ-P) and 2-methyl-4-amino-5-hydroxymethyl pyrimidine pyrophosphate (HMP-PP) to form thiamine monophosphate (TMP). The protein is Putative thiamine-phosphate synthase 2 (thiE2) of Aquifex aeolicus (strain VF5).